The following is an 800-amino-acid chain: MDIPHEAEAGAWGILPGFGRHHHPSSDATLFSSSLPVFPRGKLQLSDNRDGFSLIDDTAVSRTNKFNESADDFESHSIGNLLPDEEDLLTGMMDDLDLGELPDADDYDLFGSGGGMELDADFRDNLSMSGPPRLSLSSLGGNAIPQFNIPNGAGTVAGEHPYGEHPSRTLFVRNINSNVEDSELTALFEQYGDIRTLYTTCKHRGFVMISYYDIRSARMAMRSLQNKPLRRRKLDIHFSIPKDNPSEKDMNQGTLVVFNLDPSISNDDLHGIFGAHGEIKEIRETPHKRHHKFVEFYDVRGAEAALKALNRCEIAGKRIKVEPSRPGGARRSLMLQLNQDLENDDLHYLPMIGSPMANSPPMQGNWPLNSPVEGSPLQSVLSRSPVFGLSPTRNGHLSGLASALNSQGPSSKLAPIGRGQIGSNGFQQSSHLFQEPKMDNKYTGNLSPSGPLISNGGGIETLSGSEFLWGSPNARSEPSSSSVWSTSSTGNPLFSTRVDRSVPFPHQHQNQSRSHHHFHVGSAPSGVPLEKHFGFVPESSKDALFMNTVGLQGMSGMGLNGGSFSSKMANNGIINSGSMAENGFSSYRMMSSPRFSPMFLSSGLNPGRFASGFDSLYENGRPRRVENNSNQVESRKQFQLDLEKILNGEDSRTTLMIKNIPNKYTSKMLLAAIDEKNQGTYNFLYLPIDFKNKCNVGYAFINMLNPELIIPFYEAFNGKKWEKFNSEKVASLAYARIQGKSALIAHFQNSSLMNEDMRCRPIIFDTPNNPESVEQVVDEESKNMDLLDSQLSDDDGRERS.

RRM domains lie at 168-241 and 253-326; these read RTLF…FSIP and GTLV…PSRP. A phosphoserine mark is found at Ser384 and Ser390. 2 disordered regions span residues 470 to 489 and 776 to 800; these read GSPN…TSST and VVDE…RERS. Residues 471–488 show a composition bias toward low complexity; the sequence is SPNARSEPSSSSVWSTSS. Ser789 and Ser792 each carry phosphoserine.

Probable RNA-binding protein that plays a role in meiosis and vegetative growth. This Arabidopsis thaliana (Mouse-ear cress) protein is Protein MEI2-like 5 (ML5).